The sequence spans 163 residues: Neurotrophin-3 (163 aa).

A signal peptide spans 1–3 (IQS). Positions 4 to 119 (SSMDQGILTE…VLNRTSRRKR (116 aa)) are excised as a propeptide. A disordered region spans residues 36–61 (QTARTKDGMQTTVKKTEAEADARASQ). Residues 49–61 (KKTEAEADARASQ) show a composition bias toward basic and acidic residues. The N-linked (GlcNAc...) asparagine glycan is linked to Asn112.

The protein belongs to the NGF-beta family.

Its subcellular location is the secreted. Functionally, seems to promote the survival of visceral and proprioceptive sensory neurons. This chain is Neurotrophin-3 (NTF3), found in Boa constrictor (Boa).